Reading from the N-terminus, the 142-residue chain is Transcriptional regulator MraZ (142 aa).

SpoVT-AbrB domains lie at 5-51 (ASAL…PRPE) and 77-120 (AADV…DAAT).

This sequence belongs to the MraZ family. In terms of assembly, forms oligomers.

It is found in the cytoplasm. It localises to the nucleoid. This is Transcriptional regulator MraZ from Cupriavidus pinatubonensis (strain JMP 134 / LMG 1197) (Cupriavidus necator (strain JMP 134)).